Consider the following 219-residue polypeptide: Ras-related protein Rab-3B (219 aa).

Position 2 is an N-acetylalanine (Ala2). 9 residues coordinate GTP: Ser31, Ser32, Val33, Gly34, Lys35, Thr36, Ser37, Pro49, and Ser53. Mg(2+) is bound at residue Thr36. A Switch 1 motif is present at residues 45 to 58 (DTFTPAFVSTVGID). The Mg(2+) site is built by Thr54 and Asp77. Positions 78-96 (TAGQERYRTITTAYYRGAM) match the Switch 2 motif. Gly80 contacts GTP. Position 86 is a phosphothreonine; by LRRK2 (Thr86). Residues Asn135, Lys136, Asp138, Ala166, and Lys167 each coordinate GTP. 2 positions are modified to phosphoserine: Ser188 and Ser190. Residues Cys217 and Cys219 are each lipidated (S-geranylgeranyl cysteine). Position 219 is a cysteine methyl ester (Cys219).

The protein belongs to the small GTPase superfamily. Rab family. As to quaternary structure, interacts with RIMS1, RIMS2, RPH3A and RPH3AL. The GTP-bound form interacts with GAS8/DRC4 (via coiled-coil domains). Interacts with GDI2, CHM and CHML; phosphorylation at Thr-86 disrupts these interactions. Interacts with MADD (via uDENN domain); the GTP-bound form is preferred for interaction. The cofactor is Mg(2+). Post-translationally, phosphorylation of Thr-86 in the switch II region by LRRK2 prevents the association of RAB regulatory proteins, including CHM, CHML and RAB GDP dissociation inhibitor GDI2. As to expression, abundantly expressed in testis, lung and brain.

It localises to the cell membrane. The protein localises to the golgi apparatus. The enzyme catalyses GTP + H2O = GDP + phosphate + H(+). With respect to regulation, regulated by guanine nucleotide exchange factors (GEFs) which promote the exchange of bound GDP for free GTP. Regulated by GTPase activating proteins (GAPs) which increase the GTP hydrolysis activity. Inhibited by GDP dissociation inhibitors (GDIs) which prevent Rab-GDP dissociation. In terms of biological role, the small GTPases Rab are key regulators of intracellular membrane trafficking, from the formation of transport vesicles to their fusion with membranes. Rabs cycle between an inactive GDP-bound form and an active GTP-bound form that is able to recruit to membranes different sets of downstream effectors directly responsible for vesicle formation, movement, tethering and fusion. The protein is Ras-related protein Rab-3B of Mus musculus (Mouse).